A 142-amino-acid chain; its full sequence is Large ribosomal subunit protein uL13 (142 aa).

This sequence belongs to the universal ribosomal protein uL13 family. In terms of assembly, part of the 50S ribosomal subunit.

This protein is one of the early assembly proteins of the 50S ribosomal subunit, although it is not seen to bind rRNA by itself. It is important during the early stages of 50S assembly. The polypeptide is Large ribosomal subunit protein uL13 (Ruthia magnifica subsp. Calyptogena magnifica).